Here is a 430-residue protein sequence, read N- to C-terminus: MSSVVVVGTQWGDEGKGKITDFLSENAEAIARYQGGNNAGHTIKFDGVTYKLHLIPSGIFYKEKISVIGNGMVVDPKALVEELKYLHDKGVDTSNLRISNRAHIILPYHIRIDEADEERKGANKIGTTKKGIGPAYMDKAARVGIRIIDLLDKETFKEKLEHNLGEKNRLLERFYELEGFKLEDILDEYYEYGQQFKEYVCDTSVVLNDALDDGKRVLFEGAQGVMLDIDQGTYPFVTSSNPIAGGVTIGSGVGPSKINHVVGVAKAYTTRVGDGPFPTELFDSIGDTIREVGHEYGTTTGRPRRVGWFDSVVVRHARRVSGLTDLSLTLLDVLTGIETLKICVAYKLDGKTITEFPASLKDLARCEPVYEELPGWTEDITGVTSLDDLPVNCRHYMERIAQLTGVQVSMFSVGPDRAQTHVIKSVWRLA.

GTP-binding positions include Gly12–Lys18 and Gly40–Thr42. The active-site Proton acceptor is Asp13. Residues Asp13 and Gly40 each contribute to the Mg(2+) site. IMP is bound by residues Asp13–Lys16, Asn38–His41, Thr128, Arg142, Gln223, Thr238, and Arg302. His41 serves as the catalytic Proton donor. Thr298–Arg304 contributes to the substrate binding site. Residues Arg304, Leu330 to Asp332, and Ser412 to Gly414 contribute to the GTP site.

It belongs to the adenylosuccinate synthetase family. In terms of assembly, homodimer. Mg(2+) serves as cofactor.

It is found in the cytoplasm. The enzyme catalyses IMP + L-aspartate + GTP = N(6)-(1,2-dicarboxyethyl)-AMP + GDP + phosphate + 2 H(+). It participates in purine metabolism; AMP biosynthesis via de novo pathway; AMP from IMP: step 1/2. Plays an important role in the de novo pathway of purine nucleotide biosynthesis. Catalyzes the first committed step in the biosynthesis of AMP from IMP. This chain is Adenylosuccinate synthetase, found in Listeria monocytogenes serovar 1/2a (strain ATCC BAA-679 / EGD-e).